A 60-amino-acid polypeptide reads, in one-letter code: Mastoparan-D (60 aa).

Positions 1 to 27 are cleaved as a signal peptide; that stretch reads MKNTILILFTAFIALLGFFGMSAEALA. AXPX repeat units lie at residues 27–30, 31–34, 35–38, and 41–44; these read ADPI, ADPV, AGPN, and ADPE. A propeptide spanning residues 28 to 45 is cleaved from the precursor; the sequence is DPIADPVAGPNPEADPEA. Leu-59 carries the leucine amide modification.

This sequence belongs to the MCD family. Mastoparan subfamily. In terms of tissue distribution, expressed by the venom gland.

Its subcellular location is the secreted. It is found in the target cell membrane. Functionally, antimicrobial and mast cell degranulating peptide. Has broad spectrum antibacterial activity against both Gram-positive and Gram-negative bacteria (S.aureus MIC=24-32 ug/ml, S.xylosus MIC=2 ug/ml, S.alactolyticus MIC=16 ug/ml, C.koseri MIC=4 ug/ml, E.coli MIC=8 ug/ml, K.pneumoniae MIC=32 ug/ml, P.aerugiosa MIC=128 ug/ml, S.choleraesuis MIC=16 ug/ml, S.typhimurium MIC=32 ug/ml, V.parahamelytics MIC=32 ug/ml). Affects membrane permeability of E.coli. Shows hemolytic activities on sheep, chicken and human erythrocytes. Its mast cell degranulation activity may be related to the activation of G-protein coupled receptors in mast cells as well as interaction with other proteins located in cell endosomal membranes in the mast cells. This chain is Mastoparan-D, found in Vespa ducalis (Black-tailed hornet).